Consider the following 299-residue polypeptide: MTISDRHADAAEQARIVALALPYLRRYAGATIVVKYGGHAMGEESLAEEFGRDIALLKQVGINPVVVHGGGPQINAMLKRLAIQSTFVDGLRVTDAAMVEVVEMVLAGTVNKMVAGLINRAGALAVGICGKDGGLIRARKLTRTRRDPEGAIERALDLGFVGEPEHVDVRVIHALTGAGLIPVVAPVGVGADGATYNINADTVAGAIAGALGANRLLMLTDVAGVLDRNGKLIPDLSIAEVEALRADGTISGGMIPKVETCIEAVRQGVKGATIVDGRVPHACLLELFTEGGIGTLIHA.

Substrate is bound by residues 70-71 (GG), arginine 92, and asparagine 197.

The protein belongs to the acetylglutamate kinase family. ArgB subfamily.

It localises to the cytoplasm. It catalyses the reaction N-acetyl-L-glutamate + ATP = N-acetyl-L-glutamyl 5-phosphate + ADP. The protein operates within amino-acid biosynthesis; L-arginine biosynthesis; N(2)-acetyl-L-ornithine from L-glutamate: step 2/4. Functionally, catalyzes the ATP-dependent phosphorylation of N-acetyl-L-glutamate. In Acidiphilium cryptum (strain JF-5), this protein is Acetylglutamate kinase.